The sequence spans 572 residues: Isocitrate lyase (572 aa).

104–106 serves as a coordination point for substrate; that stretch reads SGW. Aspartate 175 contacts Mg(2+). Catalysis depends on cysteine 213, which acts as the Proton acceptor. Residues 214–215, arginine 250, 437–441, and threonine 472 contribute to the substrate site; these read GH and NLSPS. The segment at 550-572 is disordered; the sequence is QFKGSWTGPGSESSSHVLAKSRM. The Microbody targeting signal motif lies at 570-572; that stretch reads SRM.

It belongs to the isocitrate lyase/PEP mutase superfamily. Isocitrate lyase family. Mg(2+) serves as cofactor. In terms of tissue distribution, expressed in leaves.

The protein localises to the glyoxysome. It catalyses the reaction D-threo-isocitrate = glyoxylate + succinate. It participates in carbohydrate metabolism; glyoxylate cycle; (S)-malate from isocitrate: step 1/2. Involved in storage lipid mobilization during the growth of higher plant seedling. In Oryza sativa subsp. japonica (Rice), this protein is Isocitrate lyase.